The sequence spans 40 residues: Photosystem II reaction center protein J (40 aa).

The helical transmembrane segment at 8–28 (IPLWVIGTVAGIPVIGLIGIF) threads the bilayer.

It belongs to the PsbJ family. In terms of assembly, PSII is composed of 1 copy each of membrane proteins PsbA, PsbB, PsbC, PsbD, PsbE, PsbF, PsbH, PsbI, PsbJ, PsbK, PsbL, PsbM, PsbT, PsbX, PsbY, PsbZ, Psb30/Ycf12, at least 3 peripheral proteins of the oxygen-evolving complex and a large number of cofactors. It forms dimeric complexes.

It is found in the plastid. It localises to the chloroplast thylakoid membrane. Its function is as follows. One of the components of the core complex of photosystem II (PSII). PSII is a light-driven water:plastoquinone oxidoreductase that uses light energy to abstract electrons from H(2)O, generating O(2) and a proton gradient subsequently used for ATP formation. It consists of a core antenna complex that captures photons, and an electron transfer chain that converts photonic excitation into a charge separation. The chain is Photosystem II reaction center protein J from Nasturtium officinale (Watercress).